Consider the following 582-residue polypeptide: tRNA(Ile)-lysidine synthase (582 aa).

46–51 (SGGADS) is a binding site for ATP. The region spanning 402 to 525 (DPLHAAMGEA…DLLADHWGWR (124 aa)) is the CMP/dCMP-type deaminase domain. The disordered stretch occupies residues 548 to 582 (VRRRSADTPQTPNAETPAPRSSRSTSASGKPTMLE). Over residues 563 to 575 (TPAPRSSRSTSAS) the composition is skewed to low complexity.

It belongs to the tRNA(Ile)-lysidine synthase family.

Its subcellular location is the cytoplasm. It carries out the reaction cytidine(34) in tRNA(Ile2) + L-lysine + ATP = lysidine(34) in tRNA(Ile2) + AMP + diphosphate + H(+). Its function is as follows. Ligates lysine onto the cytidine present at position 34 of the AUA codon-specific tRNA(Ile) that contains the anticodon CAU, in an ATP-dependent manner. Cytidine is converted to lysidine, thus changing the amino acid specificity of the tRNA from methionine to isoleucine. The chain is tRNA(Ile)-lysidine synthase from Deinococcus radiodurans (strain ATCC 13939 / DSM 20539 / JCM 16871 / CCUG 27074 / LMG 4051 / NBRC 15346 / NCIMB 9279 / VKM B-1422 / R1).